A 322-amino-acid chain; its full sequence is Digestive cysteine proteinase 1 (322 aa).

The N-terminal stretch at 1 to 16 is a signal peptide; sequence MKVVALFLFGLALAAA. Residues 17–105 constitute a propeptide, activation peptide; the sequence is NPSWEEFKGK…VFTSTDAAPE (89 aa). 3 cysteine pairs are disulfide-bonded: Cys126/Cys170, Cys160/Cys203, and Cys262/Cys311. Cys129 is an active-site residue. Active-site residues include His269 and Asn289.

This sequence belongs to the peptidase C1 family.

Its activity is regulated as follows. Inhibited by E-64, antipain, leupeptin, heavy metal ions, iodoacetic acid, dithionitrobenzene, p-hydroxymercuri-benzoate; activated by mercaptoethanol and dithiothreitol. The protein is Digestive cysteine proteinase 1 (LCP1) of Homarus americanus (American lobster).